The primary structure comprises 93 residues: Alpha-defensin 21 (93 aa).

A signal peptide spans 1–19; it reads MKTLVLLSALILLAYQVQT. A propeptide spanning residues 20 to 58 is cleaved from the precursor; the sequence is DPIQNTDEETNTEEQPGEDDQAVSVSFGGQEGSALHEKL. The disordered stretch occupies residues 22–43; the sequence is IQNTDEETNTEEQPGEDDQAVS. Acidic residues predominate over residues 25 to 40; that stretch reads TDEETNTEEQPGEDDQ. Cystine bridges form between cysteine 64-cysteine 89, cysteine 66-cysteine 81, and cysteine 71-cysteine 88.

Belongs to the alpha-defensin family.

Its subcellular location is the secreted. May have microbicidal activities. The polypeptide is Alpha-defensin 21 (Defa21) (Mus musculus (Mouse)).